Consider the following 180-residue polypeptide: Small ribosomal subunit protein uS4 (180 aa).

One can recognise an S4 RNA-binding domain in the interval 102-174 (RRLQTMLVRK…PARKLEQKEE (73 aa)). Residues 154-180 (VPFSPLANPEHPARKLEQKEETNEESA) form a disordered region. Residues 164–174 (HPARKLEQKEE) show a composition bias toward basic and acidic residues.

This sequence belongs to the universal ribosomal protein uS4 family. As to quaternary structure, part of the 30S ribosomal subunit. Contacts protein S5. The interaction surface between S4 and S5 is involved in control of translational fidelity.

One of the primary rRNA binding proteins, it binds directly to 16S rRNA where it nucleates assembly of the body of the 30S subunit. Its function is as follows. With S5 and S12 plays an important role in translational accuracy. The chain is Small ribosomal subunit protein uS4 from Nanoarchaeum equitans (strain Kin4-M).